The sequence spans 337 residues: Anthranilate phosphoribosyltransferase (337 aa).

5-phospho-alpha-D-ribose 1-diphosphate-binding positions include Gly81, 84–85 (GD), Ser89, 91–94 (NVST), 109–117 (KHGNRAASS), and Ala121. Gly81 contributes to the anthranilate binding site. Position 93 (Ser93) interacts with Mg(2+). Asn112 contributes to the anthranilate binding site. Arg167 contacts anthranilate. Residues Asp226 and Glu227 each contribute to the Mg(2+) site.

This sequence belongs to the anthranilate phosphoribosyltransferase family. In terms of assembly, homodimer. It depends on Mg(2+) as a cofactor.

The enzyme catalyses N-(5-phospho-beta-D-ribosyl)anthranilate + diphosphate = 5-phospho-alpha-D-ribose 1-diphosphate + anthranilate. The protein operates within amino-acid biosynthesis; L-tryptophan biosynthesis; L-tryptophan from chorismate: step 2/5. In terms of biological role, catalyzes the transfer of the phosphoribosyl group of 5-phosphorylribose-1-pyrophosphate (PRPP) to anthranilate to yield N-(5'-phosphoribosyl)-anthranilate (PRA). The polypeptide is Anthranilate phosphoribosyltransferase (Methylobacterium sp. (strain 4-46)).